A 380-amino-acid chain; its full sequence is ER-phagy receptor 1 (380 aa).

The region spanning 9–74 is the J domain; it reads DCYEILQVNH…DKRKWHEKDY (66 aa). The segment at 270–294 adopts a C2H2-type zinc-finger fold; the sequence is IMCMVCNKNFRSQNQLENHENSKKH. The tract at residues 307–337 is disordered; sequence KHAKEAQKNAESNKQPEDAPSESPYSNKVSS. S344 is modified (phosphoserine). Residues 352–355 carry the AIM motif; sequence FTFV. Residues 361–367 carry the FFAT motif; sequence EFYTASE.

As to quaternary structure, interacts (via the AIM motif) with atg8. Interacts (via the FFAT motif) with the vesicle-associated membrane protein-associated protein (VAP) family proteins scs2 and scs22.

The protein resides in the endoplasmic reticulum. The protein localises to the preautophagosomal structure. Reticulophagy receptor required for autophagosomal sequestration of endoplasmic reticulum (ER) membranes during ER stress. Confers resistance to ER stress by promoting the autophagic degradation of the ER (ER-phagy or reticulophagy). Acts as a bridging molecule to mediate the association between atg8 on the autophagic membrane and the vesicle-associated membrane protein-associated proteins (VAPs) scs2 and scs22 on the ER. May play a role in meiosis. This chain is ER-phagy receptor 1, found in Schizosaccharomyces pombe (strain 972 / ATCC 24843) (Fission yeast).